A 321-amino-acid polypeptide reads, in one-letter code: Ribose import permease protein RbsC (321 aa).

Over 1 to 22 (MTTQTVSGRRYFTKAWLMEQKS) the chain is Cytoplasmic. A helical membrane pass occupies residues 23-43 (LIALLVLIAIVSTLSPNFFTI). The Periplasmic portion of the chain corresponds to 44 to 56 (NNLFNILQQTSVN). Residues 57–77 (AIMAVGMTLVILTSGIDLSVG) traverse the membrane as a helical segment. Residues 78–125 (SLLALTGAVAASIVGIEVNALVAVAAALALGAAIGAVTGVIVAKGRVQ) are Cytoplasmic-facing. A helical transmembrane segment spans residues 126–145 (AFIATLVMMLLLRGVTMVYT). The Periplasmic segment spans residues 146-168 (NGSPVNTGFTENADLFGWFGIGR). The chain crosses the membrane as a helical span at residues 169–190 (PLGVPTPVWIMGIVFLAAWYML). Residues 191 to 220 (HHTRLGRYIYALGGNEAATRLSGINVNKIK) lie on the Cytoplasmic side of the membrane. Residues 221-240 (IIVYSLCGLLASLAGIIEVA) form a helical membrane-spanning segment. Residues 241-294 (RLSSAQPTAGTGYELDAIAAVVLGGTSLAGGKGRIVGTLIGALILGFLNNGLNL) are Periplasmic-facing. A helical membrane pass occupies residues 295–316 (LGVSSYYQMIVKAVVILLAVLV). Residues 317-321 (DNKKQ) lie on the Cytoplasmic side of the membrane.

This sequence belongs to the binding-protein-dependent transport system permease family. AraH/RbsC subfamily. As to quaternary structure, the complex is composed of an ATP-binding protein (RbsA), two transmembrane proteins (RbsC) and a solute-binding protein (RbsB).

Its subcellular location is the cell inner membrane. Part of the ABC transporter complex RbsABC involved in ribose import. Probably responsible for the translocation of the substrate across the membrane. The protein is Ribose import permease protein RbsC (rbsC) of Escherichia coli O157:H7.